Consider the following 199-residue polypeptide: Large ribosomal subunit protein bL25 (199 aa).

It belongs to the bacterial ribosomal protein bL25 family. CTC subfamily. As to quaternary structure, part of the 50S ribosomal subunit; part of the 5S rRNA/L5/L18/L25 subcomplex. Contacts the 5S rRNA. Binds to the 5S rRNA independently of L5 and L18.

Its function is as follows. This is one of the proteins that binds to the 5S RNA in the ribosome where it forms part of the central protuberance. This Pseudomonas fluorescens (strain ATCC BAA-477 / NRRL B-23932 / Pf-5) protein is Large ribosomal subunit protein bL25.